Consider the following 155-residue polypeptide: Small ribosomal subunit protein uS7 (155 aa).

The protein belongs to the universal ribosomal protein uS7 family. Part of the 30S ribosomal subunit. Contacts proteins S9 and S11.

In terms of biological role, one of the primary rRNA binding proteins, it binds directly to 16S rRNA where it nucleates assembly of the head domain of the 30S subunit. Is located at the subunit interface close to the decoding center, probably blocks exit of the E-site tRNA. The chain is Small ribosomal subunit protein uS7 from Chlorobium luteolum (strain DSM 273 / BCRC 81028 / 2530) (Pelodictyon luteolum).